The following is a 386-amino-acid chain: Peroxisomal membrane protein PEX13 (386 aa).

The disordered stretch occupies residues 1–76 (MSSTAVPRPK…SSGTYGESNT (76 aa)). The Lumenal segment spans residues 1–263 (MSSTAVPRPK…KATRRKISWK (263 aa)). The span at 23 to 39 (RNAQSLSAMMTSNQQDS) shows a compositional bias: polar residues. Low complexity predominate over residues 44–55 (ESNNSNSASESA). A compositionally biased stretch (polar residues) spans 65–76 (LNSSGTYGESNT). Residues 264-280 (PLLFFLMAVFGFPYLLN) traverse the membrane as a helical segment. Residues 281-386 (KFITKLQTSG…EHVDDETRTH (106 aa)) are Cytoplasmic-facing. Residues 306-372 (SKLEFARALY…PYNYIEIIKR (67 aa)) enclose the SH3 domain.

This sequence belongs to the peroxin-13 family. Interacts (via SH3 domain) with PEX14 (via SH3-binding motif); forming the PEX13-PEX14 docking complex.

Its subcellular location is the peroxisome membrane. In terms of biological role, component of the PEX13-PEX14 docking complex, a translocon channel that specifically mediates the import of peroxisomal cargo proteins bound to PEX5 or PEX21 receptors. The PEX13-PEX14 docking complex forms a large import pore which can be opened to a diameter of about 9 nm. Mechanistically, PEX5 (or PEX21) receptor along with cargo proteins associates with the PEX14 subunit of the PEX13-PEX14 docking complex in the cytosol, leading to the insertion of the receptor into the organelle membrane with the concomitant translocation of the cargo into the peroxisome matrix. This chain is Peroxisomal membrane protein PEX13, found in Saccharomyces cerevisiae (strain ATCC 204508 / S288c) (Baker's yeast).